The primary structure comprises 72 residues: Large ribosomal subunit protein bL31 (72 aa).

The protein belongs to the bacterial ribosomal protein bL31 family. Type A subfamily. Part of the 50S ribosomal subunit.

Functionally, binds the 23S rRNA. The protein is Large ribosomal subunit protein bL31 of Deinococcus deserti (strain DSM 17065 / CIP 109153 / LMG 22923 / VCD115).